We begin with the raw amino-acid sequence, 335 residues long: DDRGK domain-containing protein 1 (335 aa).

Residues 1 to 6 (MGDTYS) are Lumenal-facing. A helical membrane pass occupies residues 7-27 (LVLVAGYLSIFLFIGAIGYFY). The Cytoplasmic segment spans residues 28–335 (LSKPRIPSSN…NNDQDPVDTN (308 aa)). Residues 37 to 124 (NVNEQQQQQQ…GEDIGVVAPG (88 aa)) form a disordered region. 2 stretches are compositionally biased toward low complexity: residues 41–56 (QQQQ…QQPQ) and 91–103 (SSGS…TNSD). The segment covering 104-117 (NYDDDNGQEGEGED) has biased composition (acidic residues).

The protein belongs to the DDRGK1 family.

Its subcellular location is the endoplasmic reticulum membrane. Functionally, substrate adapter for ufmylation, the covalent attachment of the ubiquitin-like modifier UFM1 to substrate proteins. This Dictyostelium discoideum (Social amoeba) protein is DDRGK domain-containing protein 1.